A 530-amino-acid polypeptide reads, in one-letter code: Apolipoprotein N-acyltransferase (530 aa).

The next 6 membrane-spanning stretches (helical) occupy residues 19–39 (LIAGLAAALAHPPFGVLPGLL), 65–85 (WLAGVGYFGLGTWWVGEAFLV), 96–116 (FAVTGMAAGLALFWGLAALLY), 128–148 (LTFAGAFAALEWMRGHVLTGF), 169–189 (LVGAYGLTWITLAIAGAPAVW), and 197–217 (AATGLAVASLIGLYGYGAIAL). A CN hydrolase domain is found at 232–485 (VQADIKQDLK…SGVIDAQIPG (254 aa)). The active-site Proton acceptor is Glu-274. Residue Lys-343 is part of the active site. Cys-396 (nucleophile) is an active-site residue.

Belongs to the CN hydrolase family. Apolipoprotein N-acyltransferase subfamily.

It localises to the cell inner membrane. It carries out the reaction N-terminal S-1,2-diacyl-sn-glyceryl-L-cysteinyl-[lipoprotein] + a glycerophospholipid = N-acyl-S-1,2-diacyl-sn-glyceryl-L-cysteinyl-[lipoprotein] + a 2-acyl-sn-glycero-3-phospholipid + H(+). It functions in the pathway protein modification; lipoprotein biosynthesis (N-acyl transfer). Its function is as follows. Catalyzes the phospholipid dependent N-acylation of the N-terminal cysteine of apolipoprotein, the last step in lipoprotein maturation. In Caulobacter vibrioides (strain ATCC 19089 / CIP 103742 / CB 15) (Caulobacter crescentus), this protein is Apolipoprotein N-acyltransferase.